The chain runs to 380 residues: Cytochrome b (380 aa).

4 helical membrane-spanning segments follow: residues 33–53 (FGSL…FLAM), 77–98 (WLIR…YFHI), 113–133 (WNIG…GYVL), and 178–198 (FFAF…LHLL). Residues histidine 83 and histidine 97 each contribute to the heme b site. Residues histidine 182 and histidine 196 each coordinate heme b. Histidine 201 is a binding site for a ubiquinone. 4 helical membrane-spanning segments follow: residues 226 to 246 (YKDL…ALFS), 288 to 308 (LGGV…PFLH), 320 to 340 (VSQF…WIGG), and 347 to 367 (FIII…VFFP).

This sequence belongs to the cytochrome b family. In terms of assembly, the cytochrome bc1 complex contains 3 respiratory subunits (MT-CYB, CYC1 and UQCRFS1), 2 core proteins (UQCRC1 and UQCRC2) and probably 6 low-molecular weight proteins. It depends on heme b as a cofactor.

The protein resides in the mitochondrion inner membrane. Component of the ubiquinol-cytochrome c reductase complex (complex III or cytochrome b-c1 complex) that is part of the mitochondrial respiratory chain. The b-c1 complex mediates electron transfer from ubiquinol to cytochrome c. Contributes to the generation of a proton gradient across the mitochondrial membrane that is then used for ATP synthesis. In Sarda sarda (Atlantic bonito), this protein is Cytochrome b (mt-cyb).